Consider the following 274-residue polypeptide: MSYGPLDMYRNPGPSGPQPRDFNSIIQTCSGNIQRISQATAQIKNLMSQLGTKQDSSKLQENLQQLQHSTNQLAKETNELLKELGSLPLPLSASEQRQQKLQKERLMNDFSSALNNFQVVQRKVSEKEKESIARARAGSRLSAEDRQREEQLVSFDSHEEWNQMQSQEEEAAITEQDLELIKERETAIRQLEADILDVNQIFKDLAMMIHDQGDLIDSIEANVESSEVHVERATDQLQRAAYYQKKSRKKMCILVLVLSVIVTVLVVVIWVASK.

Disordered stretches follow at residues 1 to 20 (MSYG…PQPR) and 128 to 147 (EKES…EDRQ). N-acetylserine is present on Ser2. At 2–250 (SYGPLDMYRN…AYYQKKSRKK (249 aa)) the chain is on the cytoplasmic side. Positions 33-130 (IQRISQATAQ…QRKVSEKEKE (98 aa)) form a coiled coil. Ser139, Ser142, Ser218, and Ser225 each carry phosphoserine. The region spanning 178-240 (LELIKERETA…ERATDQLQRA (63 aa)) is the t-SNARE coiled-coil homology domain. Residues 251–271 (MCILVLVLSVIVTVLVVVIWV) traverse the membrane as a helical; Anchor for type IV membrane protein segment. At 272–274 (ASK) the chain is on the vesicular side.

The protein belongs to the syntaxin family. As to quaternary structure, associates with the BLOC-1 complex. Interacts with BLOC1S6. Interacts with NAPA and SNAP23. Identified in a complex containing STX6, STX12, VAMP4 and VTI1A. Interacts with GRIPAP1. Forms a complex with GRIP1, GRIA2 and NSG1; controls the intracellular fate of AMPAR and the endosomal sorting of the GRIA2 subunit toward recycling and membrane targeting. Interacts with NSG1. Interacts with TPC1. Interacts (via N-terminus) with VPS13B.

Its subcellular location is the endosome membrane. The protein resides in the golgi apparatus membrane. The protein localises to the endomembrane system. It localises to the early endosome membrane. It is found in the recycling endosome membrane. Its function is as follows. SNARE promoting fusion of transport vesicles with target membranes. Together with SNARE STX6, promotes movement of vesicles from endosomes to the cell membrane, and may therefore function in the endocytic recycling pathway. Through complex formation with GRIP1, GRIA2 and NSG1 controls the intracellular fate of AMPAR and the endosomal sorting of the GRIA2 subunit toward recycling and membrane targeting. In Mus musculus (Mouse), this protein is Syntaxin-12 (Stx12).